We begin with the raw amino-acid sequence, 257 residues long: Leucine-rich repeat-containing protein 3 (257 aa).

Residues 1-32 form the signal peptide; that stretch reads MGPRGRQSPSATLAPSQGSCFFILFCLRLGAS. In terms of domain architecture, LRRNT spans 33 to 64; it reads CPQACQCPDHAGAVAVHCSSRGLQEIPRDIPA. 3 LRR repeats span residues 65-86, 89-110, and 114-135; these read DTVL…AFQH, QLRE…AFSG, and GLRL…ALGK. The LRRCT domain occupies 145-198; the sequence is NPLHCECALQEALWELKLDPDSVDEIACHTSAQEQFVGKPLIQVLDSGASFCST. The helical transmembrane segment at 205–225 threads the bilayer; sequence VAMLVTMFGWFTMVIAYVVYY.

Belongs to the LRRC3 family.

The protein localises to the membrane. In Mus musculus (Mouse), this protein is Leucine-rich repeat-containing protein 3 (Lrrc3).